Reading from the N-terminus, the 462-residue chain is Exodeoxyribonuclease 7 large subunit (462 aa).

This sequence belongs to the XseA family. As to quaternary structure, heterooligomer composed of large and small subunits.

The protein resides in the cytoplasm. The enzyme catalyses Exonucleolytic cleavage in either 5'- to 3'- or 3'- to 5'-direction to yield nucleoside 5'-phosphates.. Its function is as follows. Bidirectionally degrades single-stranded DNA into large acid-insoluble oligonucleotides, which are then degraded further into small acid-soluble oligonucleotides. This chain is Exodeoxyribonuclease 7 large subunit, found in Proteus mirabilis (strain HI4320).